The primary structure comprises 662 residues: Protein-arginine deiminase type-1 (662 aa).

Positions 153, 155, 157, 164, 175, 178, 350, 352, 363, 370, 371, 374, 408, and 411 each coordinate Ca(2+). The active-site Nucleophile is the Cys-644.

The protein belongs to the protein arginine deiminase family. Monomer. Requires Ca(2+) as cofactor. Expressed only in the epidermis and uterus.

The protein resides in the cytoplasm. It carries out the reaction L-arginyl-[protein] + H2O = L-citrullyl-[protein] + NH4(+). Its function is as follows. Catalyzes the deimination of arginine residues of proteins. The sequence is that of Protein-arginine deiminase type-1 (Padi1) from Mus musculus (Mouse).